Reading from the N-terminus, the 153-residue chain is Aspartate carbamoyltransferase regulatory chain (153 aa).

Zn(2+)-binding residues include cysteine 109, cysteine 114, cysteine 138, and cysteine 141.

The protein belongs to the PyrI family. Contains catalytic and regulatory chains. Zn(2+) is required as a cofactor.

Involved in allosteric regulation of aspartate carbamoyltransferase. The polypeptide is Aspartate carbamoyltransferase regulatory chain (Escherichia coli (strain ATCC 8739 / DSM 1576 / NBRC 3972 / NCIMB 8545 / WDCM 00012 / Crooks)).